The following is a 1235-amino-acid chain: Myosin-1 (1235 aa).

Positions methionine 1 to aspartate 34 are disordered. Over residues aspartate 9–glycine 19 the composition is skewed to basic and acidic residues. The region spanning isoleucine 41–aspartate 715 is the Myosin motor domain. ATP is bound at residue glycine 134–threonine 141. Residues serine 405–alanine 487 form an actin-binding region. IQ domains lie at histidine 719–alanine 739 and alanine 740–lysine 765. Residues arginine 773–proline 962 form the TH1 domain. Disordered regions lie at residues tyrosine 949–proline 1076 and alanine 1135–tryptophan 1235. Residues lysine 982 to alanine 1046 are compositionally biased toward low complexity. Residues proline 1050–valine 1062 show a composition bias toward polar residues. Residues arginine 1063–alanine 1073 show a composition bias toward pro residues. In terms of domain architecture, SH3 spans lysine 1075–proline 1134. The span at alanine 1135–alanine 1150 shows a compositional bias: pro residues. The span at serine 1180–isoleucine 1210 shows a compositional bias: polar residues.

It belongs to the TRAFAC class myosin-kinesin ATPase superfamily. Myosin family.

Its subcellular location is the cytoplasm. It localises to the cytoskeleton. It is found in the actin patch. Functionally, type-I myosin implicated in the organization of the actin cytoskeleton. Required for proper actin cytoskeleton polarization. At the cell cortex, assembles in patch-like structures together with proteins from the actin-polymerizing machinery and promotes actin assembly. Functions as actin nucleation-promoting factor (NPF) for the Arp2/3 complex. This chain is Myosin-1 (myo-1), found in Neurospora crassa (strain ATCC 24698 / 74-OR23-1A / CBS 708.71 / DSM 1257 / FGSC 987).